The sequence spans 453 residues: MSPQTETKAGVGFKAGVNEYKLTYYTPEYETKDTDILAAFRVTPQPGVPPEERGEAVAAESSTGTWTTVWTDGLTSLDRYKGRCYHIEPVPGEEDQFIAYVAYPLDLFEEGSVTNMFTSIVGNVFGFKALRALRLEDLRIPVAYVKTFQGPPHGIQVERDKLNKYGRPLLGCTIKPKLGLSAKNYGRAVYECLRGGLDFTKDDENVNSQPFMRWRDRFLFCAEAIYKSQAETGEIKGHYLNATAGTCEDMMKRAVFARELGVPIVMHDYLTGGFTANTTLAHYCRDNGLLLHIHRAMHAVIDRQKNHGMHFRVLAKALRMSGGDHIHAGTVVGKLEGERDITLGFVDLLRDDYIEKDRSRGIYFTQDWVSLPGVIPVASRGIHVWHMPALTEIFGDDSVLQFGGGTLGHPWGNAPGAVANRVALEACVKARNEGRDLAAEGGEIIREACKWSP.

A propeptide spanning residues 1 to 2 is cleaved from the precursor; that stretch reads MS. At Pro3 the chain carries N-acetylproline. Residue Lys14 is modified to N6,N6,N6-trimethyllysine. Residues Asn123 and Thr173 each coordinate substrate. Lys175 acts as the Proton acceptor in catalysis. Lys177 contacts substrate. Mg(2+)-binding residues include Lys201, Asp203, and Glu204. The residue at position 201 (Lys201) is an N6-carboxylysine. Catalysis depends on His294, which acts as the Proton acceptor. Positions 295, 327, and 379 each coordinate substrate.

Belongs to the RuBisCO large chain family. Type I subfamily. Heterohexadecamer of 8 large chains and 8 small chains; disulfide-linked. The disulfide link is formed within the large subunit homodimers. The cofactor is Mg(2+). The disulfide bond which can form in the large chain dimeric partners within the hexadecamer appears to be associated with oxidative stress and protein turnover.

The protein resides in the plastid. Its subcellular location is the chloroplast. It carries out the reaction 2 (2R)-3-phosphoglycerate + 2 H(+) = D-ribulose 1,5-bisphosphate + CO2 + H2O. The catalysed reaction is D-ribulose 1,5-bisphosphate + O2 = 2-phosphoglycolate + (2R)-3-phosphoglycerate + 2 H(+). RuBisCO catalyzes two reactions: the carboxylation of D-ribulose 1,5-bisphosphate, the primary event in carbon dioxide fixation, as well as the oxidative fragmentation of the pentose substrate in the photorespiration process. Both reactions occur simultaneously and in competition at the same active site. This chain is Ribulose bisphosphate carboxylase large chain, found in Phuopsis stylosa (Caucasian crosswort).